The sequence spans 158 residues: Copper transporter 2 (158 aa).

The tract at residues 1 to 20 (MDHDHMHDMPPPSPSSSSMS) is disordered. The next 2 helical transmembrane spans lie at 53-73 (GMYA…EWLA) and 104-124 (YLVM…AIAG).

The protein belongs to the copper transporter (Ctr) (TC 1.A.56) family. SLC31A subfamily. In terms of tissue distribution, highly expressed in leaves and at lower levels in roots, stems and flowers.

The protein resides in the membrane. Functionally, involved in the transport of copper. This chain is Copper transporter 2 (COPT2), found in Arabidopsis thaliana (Mouse-ear cress).